A 101-amino-acid chain; its full sequence is DNA-binding protein HU (101 aa).

It belongs to the bacterial histone-like protein family. Homodimer.

In terms of biological role, histone-like DNA-binding protein which is capable of wrapping DNA to stabilize it, and thus to prevent its denaturation under extreme environmental conditions. This Rickettsia bellii (strain RML369-C) protein is DNA-binding protein HU (hup).